Here is a 157-residue protein sequence, read N- to C-terminus: Ribosomal RNA large subunit methyltransferase H (157 aa).

S-adenosyl-L-methionine is bound by residues leucine 73, glycine 105, and 124 to 129 (LSRMTF).

Belongs to the RNA methyltransferase RlmH family. In terms of assembly, homodimer.

The protein resides in the cytoplasm. The enzyme catalyses pseudouridine(1915) in 23S rRNA + S-adenosyl-L-methionine = N(3)-methylpseudouridine(1915) in 23S rRNA + S-adenosyl-L-homocysteine + H(+). Its function is as follows. Specifically methylates the pseudouridine at position 1915 (m3Psi1915) in 23S rRNA. The chain is Ribosomal RNA large subunit methyltransferase H from Porphyromonas gingivalis (strain ATCC BAA-308 / W83).